An 857-amino-acid polypeptide reads, in one-letter code: Median body protein (857 aa).

Coiled coils occupy residues 169 to 546 and 571 to 793; these read HNAL…MRTE and LAHL…TKAM.

Its subcellular location is the cytoplasm. It is found in the cytoskeleton. In terms of biological role, structural component of the ventral disk involved in maintanance of a domed conformation of the disk required for proper attachment. May have a role in immobilizing the microtubules between cell divisions. The chain is Median body protein from Giardia intestinalis (strain ATCC 50803 / WB clone C6) (Giardia lamblia).